The following is a 302-amino-acid chain: Acetylglutamate kinase (302 aa).

Residues 73 to 74 (GG), Arg-95, and Asn-200 each bind substrate.

Belongs to the acetylglutamate kinase family. ArgB subfamily.

Its subcellular location is the cytoplasm. It catalyses the reaction N-acetyl-L-glutamate + ATP = N-acetyl-L-glutamyl 5-phosphate + ADP. It participates in amino-acid biosynthesis; L-arginine biosynthesis; N(2)-acetyl-L-ornithine from L-glutamate: step 2/4. Its function is as follows. Catalyzes the ATP-dependent phosphorylation of N-acetyl-L-glutamate. The protein is Acetylglutamate kinase of Sphingopyxis alaskensis (strain DSM 13593 / LMG 18877 / RB2256) (Sphingomonas alaskensis).